We begin with the raw amino-acid sequence, 462 residues long: MENKSARAKVQAFGGFLTAMVIPNIGAFIAWGFITALFIPTGWLPNEHFAKIVGPMITYLLPVMIGSTGGHLVGGKRGAVMGGIGTIGVIVGAEIPMFLGSMIMGPLGGLVIKYVDKALEKRIPAGFEMVINNFSLGIAGMLLCLLGFEVIGPAVLIANTFVKECIEALVHAGYLPLLSVINEPAKVLFLNNAIDQGVYYPLGMQQASVNGKSIFFMVASNPGPGLGLLLAFTLFGKGMSKRSAPGAMIIHFLGGIHELYFPYVLMKPLTIIAMIAGGMSGTWMFNLLDGGLVAGPSPGSIFAYLALTPKGSFLATIAGVTVGTLVSFAITSLILKMEKTVETESEDEFAQSANAVKAMKQEGAFSLSRVKRIAFVCDAGMGSSAMGATTFRKRLEKAGLAIEVKHYAIENVPADADIVVTHASLEGRVKRVTDKPLILINNYIGDPKLDTLFNQLTAEHKH.

Residues 1–24 (MENKSARAKVQAFGGFLTAMVIPN) are Cytoplasmic-facing. Residues 13–344 (FGGFLTAMVI…LKMEKTVETE (332 aa)) form the PTS EIIC type-2 domain. The helical transmembrane segment at 25-46 (IGAFIAWGFITALFIPTGWLPN) threads the bilayer. The Periplasmic portion of the chain corresponds to 47 to 50 (EHFA). Residues 51-71 (KIVGPMITYLLPVMIGSTGGH) form a helical membrane-spanning segment. At 72–134 (LVGGKRGAVM…AGFEMVINNF (63 aa)) the chain is on the cytoplasmic side. The chain crosses the membrane as a helical span at residues 135 to 156 (SLGIAGMLLCLLGFEVIGPAVL). The Periplasmic segment spans residues 157–165 (IANTFVKEC). A helical membrane pass occupies residues 166–186 (IEALVHAGYLPLLSVINEPAK). Residues 187-273 (VLFLNNAIDQ…VLMKPLTIIA (87 aa)) are Cytoplasmic-facing. Residues 274–293 (MIAGGMSGTWMFNLLDGGLV) form a helical membrane-spanning segment. Residues 294 to 313 (AGPSPGSIFAYLALTPKGSF) lie on the Periplasmic side of the membrane. A helical transmembrane segment spans residues 314 to 335 (LATIAGVTVGTLVSFAITSLIL). At 336-462 (KMEKTVETES…FNQLTAEHKH (127 aa)) the chain is on the cytoplasmic side. A PTS EIIB type-2 domain is found at 371–461 (KRIAFVCDAG…LFNQLTAEHK (91 aa)). Residue C377 is the Phosphocysteine intermediate; for EIIB activity of the active site. C377 is subject to Phosphocysteine; by EIIA.

It localises to the cell inner membrane. It carries out the reaction D-mannitol(out) + N(pros)-phospho-L-histidyl-[protein] = D-mannitol 1-phosphate(in) + L-histidyl-[protein]. The phosphoenolpyruvate-dependent sugar phosphotransferase system (sugar PTS), a major carbohydrate active transport system, catalyzes the phosphorylation of incoming sugar substrates concomitantly with their translocation across the cell membrane. The enzyme II CmtAB PTS system is involved in D-mannitol transport. The polypeptide is PTS system mannitol-specific cryptic EIICB component (cmtA) (Escherichia coli O157:H7).